We begin with the raw amino-acid sequence, 143 residues long: Succinate dehydrogenase assembly factor 2, mitochondrial (143 aa).

The protein belongs to the SDHAF2 family. Interacts with the flavoprotein subunit within the SDH catalytic dimer.

It is found in the mitochondrion matrix. Its function is as follows. Plays an essential role in the assembly of succinate dehydrogenase (SDH), an enzyme complex (also referred to as respiratory complex II) that is a component of both the tricarboxylic acid (TCA) cycle and the mitochondrial electron transport chain, and which couples the oxidation of succinate to fumarate with the reduction of ubiquinone (coenzyme Q) to ubiquinol. Required for flavinylation (covalent attachment of FAD) of the flavoprotein subunit of the SDH catalytic dimer. This chain is Succinate dehydrogenase assembly factor 2, mitochondrial, found in Schizosaccharomyces japonicus (strain yFS275 / FY16936) (Fission yeast).